The following is a 549-amino-acid chain: Ankyrin repeat domain-containing protein SOWAHA (549 aa).

The N-terminal stretch at 1–17 (MALAAAAAAAAAGVSQA) is a signal peptide. 2 disordered regions span residues 82-219 (KPRP…PCML) and 235-256 (EEPG…PLLL). Over residues 203–216 (PGPGAAKGPPQQKP) the composition is skewed to low complexity. The segment covering 235 to 248 (EEPGLRRQLSEEPS) has biased composition (basic and acidic residues). A Phosphoserine modification is found at Ser260. ANK repeat units lie at residues 345–374 (SGFT…RSGA) and 384–414 (GGYT…QVHV). The tract at residues 513 to 549 (PRKKTKIRGGLPAFSEISRRPTPGPLAGLVPSLPPTT) is disordered.

It belongs to the SOWAH family.

In Homo sapiens (Human), this protein is Ankyrin repeat domain-containing protein SOWAHA (SOWAHA).